The following is a 1195-amino-acid chain: Chromosome partition protein Smc (1195 aa).

33–40 is an ATP binding site; it reads PNGSGKSN. Coiled coils occupy residues 185–241, 273–348, and 380–528; these read GVAQ…RQEQ, DAAT…IQAL, and QYQQ…QETQ. Residues 542–658 form the SMC hinge domain; the sequence is PGVHGLVAQL…FERLDQARRY (117 aa). Residues 698–1043 adopt a coiled-coil conformation; the sequence is GESAEVRAIR…ELLLRIENFT (346 aa).

The protein belongs to the SMC family. In terms of assembly, homodimer.

It localises to the cytoplasm. In terms of biological role, required for chromosome condensation and partitioning. This chain is Chromosome partition protein Smc, found in Synechococcus sp. (strain ATCC 27144 / PCC 6301 / SAUG 1402/1) (Anacystis nidulans).